Consider the following 489-residue polypeptide: 5'-AMP-activated protein kinase subunit gamma-3 (489 aa).

Positions Met-1–Gly-113 are disordered. A compositionally biased stretch (low complexity) spans Ser-34–Ser-46. The segment covering Arg-50–Arg-62 has biased composition (basic residues). CBS domains follow at residues Met-197–Leu-258, Cys-280–Arg-340, and Thr-355–Met-415. ADP is bound by residues Arg-225, Met-240–Asp-245, Val-285, His-306–Arg-307, and Lys-325. AMP contacts are provided by residues Arg-225, Met-240–Asp-245, Val-285, His-306, His-306–Arg-307, Lys-325, Thr-355, Ala-360, Ser-381–Ala-382, Ser-397–Asp-400, Arg-424, Leu-432, His-453, His-453–Arg-454, and Ser-469–Asp-472. Residues Arg-225, Met-240 to Asp-245, Val-285, His-306 to Arg-307, Arg-307, and Lys-325 contribute to the ATP site. The short motif at Leu-293 to Val-314 is the AMPK pseudosubstrate element. ADP-binding positions include Ser-397–Asp-400, Arg-424, Leu-432, and His-453–Arg-454. Residues Ser-397–Asp-400, Arg-424, Leu-432, and His-453–Arg-454 contribute to the ATP site. Positions Cys-427 to Ala-486 constitute a CBS 4 domain.

Belongs to the 5'-AMP-activated protein kinase gamma subunit family. In terms of assembly, AMPK is a heterotrimer of an alpha catalytic subunit (PRKAA1 or PRKAA2), a beta (PRKAB1 or PRKAB2) and a gamma non-catalytic subunits (PRKAG1, PRKAG2 or PRKAG3). Interacts with FNIP1 and FNIP2. Phosphorylated by ULK1; leading to negatively regulate AMPK activity and suggesting the existence of a regulatory feedback loop between ULK1 and AMPK. Post-translationally, glycosylated; O-GlcNAcylated by OGT, promoting the AMP-activated protein kinase (AMPK) activity. As to expression, skeletal muscle, with weak expression in heart and pancreas.

In terms of biological role, AMP/ATP-binding subunit of AMP-activated protein kinase (AMPK), an energy sensor protein kinase that plays a key role in regulating cellular energy metabolism. In response to reduction of intracellular ATP levels, AMPK activates energy-producing pathways and inhibits energy-consuming processes: inhibits protein, carbohydrate and lipid biosynthesis, as well as cell growth and proliferation. AMPK acts via direct phosphorylation of metabolic enzymes, and by longer-term effects via phosphorylation of transcription regulators. AMPK also acts as a regulator of cellular polarity by remodeling the actin cytoskeleton; probably by indirectly activating myosin. The AMPK gamma3 subunit is a non-catalytic subunit with a regulatory role in muscle energy metabolism. It mediates binding to AMP, ADP and ATP, leading to AMPK activation or inhibition: AMP-binding results in allosteric activation of alpha catalytic subunit (PRKAA1 or PRKAA2) both by inducing phosphorylation and preventing dephosphorylation of catalytic subunits. ADP also stimulates phosphorylation, without stimulating already phosphorylated catalytic subunit. ATP promotes dephosphorylation of catalytic subunit, rendering the AMPK enzyme inactive. In Homo sapiens (Human), this protein is 5'-AMP-activated protein kinase subunit gamma-3 (PRKAG3).